The sequence spans 221 residues: Chaperone protein TorD (221 aa).

Belongs to the TorD/DmsD family. TorD subfamily.

It localises to the cytoplasm. Involved in the biogenesis of TorA. Acts on TorA before the insertion of the molybdenum cofactor and, as a result, probably favors a conformation of the apoenzyme that is competent for acquiring the cofactor. The polypeptide is Chaperone protein TorD (Shewanella pealeana (strain ATCC 700345 / ANG-SQ1)).